Here is an 832-residue protein sequence, read N- to C-terminus: Cytosolic carboxypeptidase-like protein 5 (832 aa).

The disordered stretch occupies residues 27-50; sequence TVPSDGEGVGGAATAPTSGSASSP. Low complexity predominate over residues 38 to 50; it reads AATAPTSGSASSP. A Peptidase M14 domain is found at 157 to 571; it reads YPFSYSDCQD…ALAIAALDMA (415 aa). The Zn(2+) site is built by His252 and Glu255. Residues 343-354 show a composition bias toward low complexity; the sequence is NSKNPSNQQPSS. 2 disordered regions span residues 343–362 and 376–402; these read NSKNPSNQQPSSLHLPPEVP and LHLGQSPDGENHDRWTETEPTEEKTDP. The segment covering 384–401 has biased composition (basic and acidic residues); the sequence is GENHDRWTETEPTEEKTD. His435 lines the Zn(2+) pocket. The active-site Proton donor/acceptor is Glu517. The disordered stretch occupies residues 606–752; sequence STANVGLNKK…ASPTSSRNMG (147 aa). The segment covering 621–636 has biased composition (polar residues); that stretch reads PPKSNNGLPVSCSENA. The segment covering 644–654 has biased composition (low complexity); sequence STGTSTGGSSS. Residues 655-666 show a composition bias toward polar residues; that stretch reads QQNSPQMKNSPS. A compositionally biased stretch (low complexity) spans 708 to 752; the sequence is QQQQQQQQQQQQQQQQPLNQRSTTSSLAPSPTLASASPTSSRNMG.

Belongs to the peptidase M14 family. Zn(2+) serves as cofactor.

The protein resides in the cytoplasm. The protein localises to the cytosol. It localises to the nucleus. Its subcellular location is the cytoskeleton. It is found in the spindle. The protein resides in the midbody. It carries out the reaction gamma-L-glutamyl-L-glutamyl-[protein] + H2O = L-glutamyl-[protein] + L-glutamate. The catalysed reaction is (L-glutamyl)(n+1)-gamma-L-glutamyl-L-glutamyl-[protein] + H2O = (L-glutamyl)(n)-gamma-L-glutamyl-L-glutamyl-[protein] + L-glutamate. It catalyses the reaction C-terminal L-alpha-aminoacyl-L-glutamyl-[tubulin] + H2O = C-terminal L-alpha-aminoacyl-[tubulin] + L-glutamate. The enzyme catalyses C-terminal L-alpha-aminoacyl-L-glutamyl-L-glutamyl-[tubulin] + H2O = C-terminal L-alpha-aminoacyl-L-glutamyl-[tubulin] + L-glutamate. Functionally, metallocarboxypeptidase that mediates deglutamylation of tubulin and non-tubulin target proteins. Catalyzes the removal of polyglutamate side chains present on the gamma-carboxyl group of glutamate residues within the C-terminal tail of alpha- and beta-tubulin. Cleaves alpha- and gamma-linked polyglutamate tubulin side-chain, as well as the branching point glutamate. Also catalyzes the removal of alpha-linked glutamate residues from the carboxy-terminus of alpha-tubulin. Mediates deglutamylation of nucleotidyltransferase CGAS, leading to CGAS antiviral defense response activation. This Rattus norvegicus (Rat) protein is Cytosolic carboxypeptidase-like protein 5 (Agbl5).